Here is a 227-residue protein sequence, read N- to C-terminus: PKHD-type hydroxylase Reut_B4660 (227 aa).

Positions 78-178 (KVFPPLFNRY…RVSSFFWIQS (101 aa)) constitute a Fe2OG dioxygenase domain. Fe cation-binding residues include H96, D98, and H159. R169 serves as a coordination point for 2-oxoglutarate.

Fe(2+) serves as cofactor. L-ascorbate is required as a cofactor.

The protein is PKHD-type hydroxylase Reut_B4660 of Cupriavidus pinatubonensis (strain JMP 134 / LMG 1197) (Cupriavidus necator (strain JMP 134)).